The chain runs to 644 residues: Tubulin--tyrosine ligase-like protein 12 (644 aa).

The segment covering 1–13 (MEAERGPERRPAE) has biased composition (basic and acidic residues). Residues 1–25 (MEAERGPERRPAERSSPGQTPEEGA) are disordered. The TTL domain occupies 300–644 (PHGHIFKVYT…PGGCHVTCLV (345 aa)). Residues 450–453 (SKYI), Lys468, and Asp470 contribute to the ATP site.

Belongs to the tubulin--tyrosine ligase family. Interacts with MAVS; the interaction prevents MAVS binding to TBK1 and IKBKE. Interacts (via N-terminus) with TBK1 (via protein kinase domain). Interacts (via TTL domain) with IKBKE (via protein kinase domain). Interacts with tubulin alpha. Interacts with histone H3 and histone H4 (when trimethylated at 'Lys-20' (H4K20me3)). Interacts with CBX3. In terms of tissue distribution, expressed in the basal layer of prostate and endothelial cells. Increased expression in prostatic intraepithelial neoplasia and metastatic lesions.

The protein resides in the cytoplasm. Its subcellular location is the midbody. It is found in the cytoskeleton. It localises to the microtubule organizing center. The protein localises to the centrosome. The protein resides in the spindle. Its subcellular location is the nucleus. Functionally, negatively regulates post-translational modifications of tubulin, including detyrosination of the C-terminus and polyglutamylation of glutamate residues. Also, indirectly promotes histone H4 trimethylation at 'Lys-20' (H4K20me3). Probably by controlling tubulin and/or histone H4 post-translational modifications, plays a role in mitosis and in maintaining chromosome number stability. During RNA virus-mediated infection, acts as a negative regulator of the RIG-I pathway by preventing MAVS binding to TBK1 and IKBKE. This Homo sapiens (Human) protein is Tubulin--tyrosine ligase-like protein 12 (TTLL12).